Consider the following 380-residue polypeptide: Glucose-1-phosphate adenylyltransferase (380 aa).

Residues G164, 179–180 (EK), and S190 each bind alpha-D-glucose 1-phosphate.

It belongs to the bacterial/plant glucose-1-phosphate adenylyltransferase family. In terms of assembly, homotetramer.

It carries out the reaction alpha-D-glucose 1-phosphate + ATP + H(+) = ADP-alpha-D-glucose + diphosphate. It participates in glycan biosynthesis; glycogen biosynthesis. Functionally, involved in the biosynthesis of ADP-glucose, a building block required for the elongation reactions to produce glycogen. Catalyzes the reaction between ATP and alpha-D-glucose 1-phosphate (G1P) to produce pyrophosphate and ADP-Glc. This chain is Glucose-1-phosphate adenylyltransferase, found in Streptococcus pneumoniae (strain Hungary19A-6).